Reading from the N-terminus, the 499-residue chain is Hepatic triacylglycerol lipase (499 aa).

Positions 1-22 are cleaved as a signal peptide; sequence MDTSPLCFSILLVLCIFIQSSA. N-linked (GlcNAc...) asparagine glycans are attached at residues Asn-42 and Asn-78. Ser-168 (nucleophile) is an active-site residue. Asp-194 functions as the Charge relay system in the catalytic mechanism. The segment at 254–277 is essential for determining substrate specificity; sequence CHFLELYRHIAQHGFNAITQTIKC. The active-site Charge relay system is His-279. A PLAT domain is found at 352-486; it reads YHYQFKIQFI…RPTQEKIFVK (135 aa). N-linked (GlcNAc...) asparagine glycans are attached at residues Asn-362 and Asn-397.

The protein belongs to the AB hydrolase superfamily. Lipase family. As to quaternary structure, homodimer.

The protein resides in the secreted. The catalysed reaction is a triacylglycerol + H2O = a diacylglycerol + a fatty acid + H(+). It carries out the reaction a 1-acyl-sn-glycero-3-phosphocholine + H2O = sn-glycerol 3-phosphocholine + a fatty acid + H(+). It catalyses the reaction a 1,2-diacyl-sn-glycero-3-phosphocholine + H2O = a 2-acyl-sn-glycero-3-phosphocholine + a fatty acid + H(+). The enzyme catalyses 1,2,3-tri-(9Z-octadecenoyl)-glycerol + H2O = di-(9Z)-octadecenoylglycerol + (9Z)-octadecenoate + H(+). The catalysed reaction is 1,2-di-(9Z-octadecenoyl)-sn-glycero-3-phosphocholine + H2O = (9Z-octadecenoyl)-sn-glycero-3-phosphocholine + (9Z)-octadecenoate + H(+). It carries out the reaction 1,2,3-tributanoylglycerol + H2O = dibutanoylglycerol + butanoate + H(+). It catalyses the reaction 1,2-dihexadecanoyl-sn-glycero-3-phosphocholine + H2O = hexadecanoyl-sn-glycero-3-phosphocholine + hexadecanoate + H(+). The enzyme catalyses 1,2-di-(9Z-octadecenoyl)-sn-glycerol + H2O = 2-(9Z-octadecenoyl)-glycerol + (9Z)-octadecenoate + H(+). The catalysed reaction is 1,2,3-tri-(9Z-octadecenoyl)-glycerol + H2O = 2,3-di-(9Z)-octadecenoyl-sn-glycerol + (9Z)-octadecenoate + H(+). It carries out the reaction 1-(9Z-octadecenoyl)-sn-glycero-3-phospho-L-serine + H2O = sn-glycero-3-phospho-L-serine + (9Z)-octadecenoate + H(+). It catalyses the reaction 1-hexadecanoyl-sn-glycero-3-phosphocholine + H2O = sn-glycerol 3-phosphocholine + hexadecanoate + H(+). The enzyme catalyses 1,3-di-(9Z-octadecenoyl)-glycerol + H2O = 3-(9Z-octadecenoyl)-sn-glycerol + (9Z)-octadecenoate + H(+). Phospholipase A1 and triacylglycerol lipase are inhibited by sphingomyelin. In terms of biological role, catalyzes the hydrolysis of triglycerides and phospholipids present in circulating plasma lipoproteins, including chylomicrons, intermediate density lipoproteins (IDL), low density lipoproteins (LDL) of large size and high density lipoproteins (HDL), releasing free fatty acids (FFA) and smaller lipoprotein particles. Also exhibits lysophospholipase activity. Can hydrolyze both neutral lipid and phospholipid substrates but shows a greater binding affinity for neutral lipid substrates than phospholipid substrates. In native LDL, preferentially hydrolyzes the phosphatidylcholine species containing polyunsaturated fatty acids at sn-2 position. This is Hepatic triacylglycerol lipase (LIPC) from Homo sapiens (Human).